A 466-amino-acid chain; its full sequence is Asparagine--tRNA ligase (466 aa).

Belongs to the class-II aminoacyl-tRNA synthetase family. As to quaternary structure, homodimer.

It localises to the cytoplasm. It carries out the reaction tRNA(Asn) + L-asparagine + ATP = L-asparaginyl-tRNA(Asn) + AMP + diphosphate + H(+). This is Asparagine--tRNA ligase from Shewanella pealeana (strain ATCC 700345 / ANG-SQ1).